The following is a 393-amino-acid chain: tRNA(Met) cytidine acetate ligase (393 aa).

ATP contacts are provided by Gly81, Asn142, and Arg167.

Belongs to the TmcAL family.

Its subcellular location is the cytoplasm. The catalysed reaction is cytidine(34) in elongator tRNA(Met) + acetate + ATP = N(4)-acetylcytidine(34) in elongator tRNA(Met) + AMP + diphosphate. Functionally, catalyzes the formation of N(4)-acetylcytidine (ac(4)C) at the wobble position of elongator tRNA(Met), using acetate and ATP as substrates. First activates an acetate ion to form acetyladenylate (Ac-AMP) and then transfers the acetyl group to tRNA to form ac(4)C34. This is tRNA(Met) cytidine acetate ligase from Bacillus anthracis (strain A0248).